The following is an 80-amino-acid chain: Pigment-dispersing hormone peptides (80 aa).

The signal sequence occupies residues 1–20; it reads MANYITIAIIVGIVCGQALS. A propeptide spanning residues 21 to 58 is cleaved from the precursor; sequence VEDVDRNLLELNLPYGRGLDSELQLARLMLAAPRFCHP. Ala78 carries the post-translational modification Alanine amide.

This sequence belongs to the arthropod PDH family. Expressed in the brain (at protein level).

Its subcellular location is the secreted. Neuropeptide PDF is the main transmitter regulating circadian locomotor rhythms. This Camponotus floridanus (Florida carpenter ant) protein is Pigment-dispersing hormone peptides.